The sequence spans 45 residues: Pyruvate dehydrogenase E1 component (45 aa).

As to quaternary structure, homodimer. It depends on thiamine diphosphate as a cofactor.

It catalyses the reaction N(6)-[(R)-lipoyl]-L-lysyl-[protein] + pyruvate + H(+) = N(6)-[(R)-S(8)-acetyldihydrolipoyl]-L-lysyl-[protein] + CO2. Functionally, the pyruvate dehydrogenase complex catalyzes the overall conversion of pyruvate to acetyl-CoA and CO(2). It contains multiple copies of three enzymatic components: pyruvate dehydrogenase (E1), dihydrolipoamide acetyltransferase (E2) and lipoamide dehydrogenase (E3). This chain is Pyruvate dehydrogenase E1 component, found in Azotobacter vinelandii.